Here is a 267-residue protein sequence, read N- to C-terminus: Methylglyoxal reductase DkgB (267 aa).

Tyr-39 (proton donor) is an active-site residue. His-97 is a binding site for substrate. 179–231 (MTLAYGKALKDEVIARIAVKHNATPVQVILAWAMGEGYSVIPSSTRRENLASN) contacts NADP(+).

Belongs to the aldo/keto reductase family. In terms of assembly, monomer.

It localises to the cytoplasm. The enzyme catalyses hydroxyacetone + NADP(+) = methylglyoxal + NADPH + H(+). Aldo-keto reductase that significantly contributes to cellular methylglyoxal detoxification by catalyzing the NADPH-dependent conversion of methylglyoxal to acetol. The chain is Methylglyoxal reductase DkgB from Salmonella typhi.